The chain runs to 415 residues: Serine hydroxymethyltransferase (415 aa).

Residues leucine 122 and 126 to 128 (GHL) contribute to the (6S)-5,6,7,8-tetrahydrofolate site. Position 230 is an N6-(pyridoxal phosphate)lysine (lysine 230).

The protein belongs to the SHMT family. Homodimer. Requires pyridoxal 5'-phosphate as cofactor.

It localises to the cytoplasm. It catalyses the reaction (6R)-5,10-methylene-5,6,7,8-tetrahydrofolate + glycine + H2O = (6S)-5,6,7,8-tetrahydrofolate + L-serine. It functions in the pathway one-carbon metabolism; tetrahydrofolate interconversion. The protein operates within amino-acid biosynthesis; glycine biosynthesis; glycine from L-serine: step 1/1. Catalyzes the reversible interconversion of serine and glycine with tetrahydrofolate (THF) serving as the one-carbon carrier. This reaction serves as the major source of one-carbon groups required for the biosynthesis of purines, thymidylate, methionine, and other important biomolecules. Also exhibits THF-independent aldolase activity toward beta-hydroxyamino acids, producing glycine and aldehydes, via a retro-aldol mechanism. The chain is Serine hydroxymethyltransferase from Cupriavidus necator (strain ATCC 17699 / DSM 428 / KCTC 22496 / NCIMB 10442 / H16 / Stanier 337) (Ralstonia eutropha).